The sequence spans 355 residues: MASNPEEKSNDRQKALDNAISQIEKAFGKGAIMKLKQNPVEKIDTISTGSIALDSALGVGGLPKGRIVEIFGPESSGKTTLALHVIAEAQKKGGLCAFIDAEHALDVMYARKLGVNTDNLVISQPDTGEQALHIVEYLVCSSAVDVIVVDSVAALTPRAEIEGDMGDQHVGLQARLLSHGLRKLTSAVSKANCILIFINQIRMKIGVVYGNPETTTGGNALKFYTSVRLDIRKVGAIKDKESIKGNETRVKVVKNKVAPPFREAKFDIMYNEGVSKLGEIIDIGAKLGVLEKAGAYYSYNNTRLGQGRENVKNYFKANKEVANEVEAKIRDLLGNSDNSITMEEESRQLLEEAVF.

72–79 (GPESSGKT) is an ATP binding site.

The protein belongs to the RecA family.

It is found in the cytoplasm. In terms of biological role, can catalyze the hydrolysis of ATP in the presence of single-stranded DNA, the ATP-dependent uptake of single-stranded DNA by duplex DNA, and the ATP-dependent hybridization of homologous single-stranded DNAs. It interacts with LexA causing its activation and leading to its autocatalytic cleavage. The protein is Protein RecA of Wolbachia sp. subsp. Brugia malayi (strain TRS).